The sequence spans 333 residues: Secreted mono- and diacylglycerol lipase 1 (333 aa).

The first 16 residues, 1–16 (MMLILSILSIIAFAAA), serve as a signal peptide directing secretion. 2 disulfide bridges follow: Cys56-Cys268 and Cys276-Cys298. Ser176 acts as the Nucleophile in catalysis. Residues Asp230 and His288 contribute to the active site.

Belongs to the AB hydrolase superfamily. Lipase family. Class 3 subfamily.

It localises to the secreted. The catalysed reaction is a monoacylglycerol + H2O = glycerol + a fatty acid + H(+). The enzyme catalyses a diacylglycerol + H2O = a monoacylglycerol + a fatty acid + H(+). Secreted mono- and diacylglycerol lipase that allows the use of hydrolyzed lipids as carbon source and might play a role in pathogenicity. Shows lipolytic activity towards olive oil and p-nitrophenylpalmitate. The chain is Secreted mono- and diacylglycerol lipase 1 from Fusarium solani (Filamentous fungus).